A 354-amino-acid polypeptide reads, in one-letter code: tRNA N6-adenosine threonylcarbamoyltransferase (354 aa).

Residues His111 and His115 each coordinate Fe cation. Substrate is bound by residues 134–138 (LVSGG), Asp167, Gly180, and Asn279. Residue Asp319 participates in Fe cation binding.

It belongs to the KAE1 / TsaD family. It depends on Fe(2+) as a cofactor.

The protein resides in the cytoplasm. It carries out the reaction L-threonylcarbamoyladenylate + adenosine(37) in tRNA = N(6)-L-threonylcarbamoyladenosine(37) in tRNA + AMP + H(+). In terms of biological role, required for the formation of a threonylcarbamoyl group on adenosine at position 37 (t(6)A37) in tRNAs that read codons beginning with adenine. Is involved in the transfer of the threonylcarbamoyl moiety of threonylcarbamoyl-AMP (TC-AMP) to the N6 group of A37, together with TsaE and TsaB. TsaD likely plays a direct catalytic role in this reaction. In Neisseria meningitidis serogroup A / serotype 4A (strain DSM 15465 / Z2491), this protein is tRNA N6-adenosine threonylcarbamoyltransferase.